The following is a 530-amino-acid chain: Phosphoenolpyruvate carboxykinase (ATP) 2 (530 aa).

Residues R54, Y191, and K197 each contribute to the substrate site. Residues K197, H216, and 232–240 contribute to the ATP site; that span reads GLSGTGKTT. The Mn(2+) site is built by K197 and H216. D253 contributes to the Mn(2+) binding site. Residues E281, R318, 437-438, and T443 contribute to the ATP site; that span reads RV. R318 lines the substrate pocket.

Belongs to the phosphoenolpyruvate carboxykinase (ATP) family. Mn(2+) is required as a cofactor.

Its subcellular location is the cytoplasm. It carries out the reaction oxaloacetate + ATP = phosphoenolpyruvate + ADP + CO2. It functions in the pathway carbohydrate biosynthesis; gluconeogenesis. In terms of biological role, involved in the gluconeogenesis. Catalyzes the conversion of oxaloacetate (OAA) to phosphoenolpyruvate (PEP) through direct phosphoryl transfer between the nucleoside triphosphate and OAA. The protein is Phosphoenolpyruvate carboxykinase (ATP) 2 of Salinibacter ruber (strain DSM 13855 / M31).